A 333-amino-acid chain; its full sequence is Transcription initiation factor IIB (333 aa).

A TFIIB-type zinc finger spans residues 33–64; the sequence is EVYRCPICGNDKFIYNYERGEVVCIVCGAVVQ. Positions 37, 40, 56, and 59 each coordinate Zn(2+). Repeat copies occupy residues 149-232 and 243-324.

The protein belongs to the TFIIB family.

Functionally, stabilizes TBP binding to an archaeal box-A promoter. Also responsible for recruiting RNA polymerase II to the pre-initiation complex (DNA-TBP-TFIIB). This chain is Transcription initiation factor IIB, found in Pyrobaculum neutrophilum (strain DSM 2338 / JCM 9278 / NBRC 100436 / V24Sta) (Thermoproteus neutrophilus).